Consider the following 658-residue polypeptide: Transport protein particle subunit trs85-1 (658 aa).

This sequence belongs to the TRS85 family. In terms of assembly, part of the multisubunit TRAPP (transport protein particle) complexes I and II.

It is found in the golgi apparatus. The protein resides in the cis-Golgi network. Its function is as follows. Component of the TRAPP I and TRAPP II complexes. TRAPP I plays a key role in the late stages of endoplasmic reticulum to Golgi traffic. TRAPP II seems to play a role in intra-Golgi transport. Has a role late in meiosis following DNA replication. This is Transport protein particle subunit trs85-1 (trs85-1) from Schizosaccharomyces pombe (strain 972 / ATCC 24843) (Fission yeast).